The sequence spans 354 residues: Arginase-2, mitochondrial (354 aa).

Residues 1–22 constitute a mitochondrion transit peptide; sequence MSLRSHLSRLLRTQVHSVRKKS. 4 residues coordinate Mn(2+): histidine 120, aspartate 143, histidine 145, and aspartate 147. Substrate contacts are provided by residues 145–149, 156–158, and aspartate 202; these read HADIN and SGN. Mn(2+) contacts are provided by aspartate 251 and aspartate 253. Substrate-binding residues include threonine 265 and glutamate 296. Residues 332 to 354 are disordered; that stretch reads IVYDQLPTPSSPDESESEERVRI.

Belongs to the arginase family. As to quaternary structure, homotrimer. Mn(2+) serves as cofactor.

It is found in the mitochondrion. The enzyme catalyses L-arginine + H2O = urea + L-ornithine. Its pathway is nitrogen metabolism; urea cycle; L-ornithine and urea from L-arginine: step 1/1. Its function is as follows. May play a role in the regulation of extra-urea cycle arginine metabolism and also in down-regulation of nitric oxide synthesis. Extrahepatic arginase functions to regulate L-arginine bioavailability to nitric oxid synthase (NOS). Arginine metabolism is a critical regulator of innate and adaptive immune responses. Seems to be involved in negative regulation of the survival capacity of activated T cells. May suppress inflammation-related signaling in asthmatic airway epithelium. May play a role in promoting prenatal immune suppression. Regulates RPS6KB1 signaling, which promotes endothelial cell senescence and inflammation and implicates NOS3/eNOS dysfunction. Can inhibit endothelial autophagy independently of its enzymatic activity implicating mTORC2 signaling. Involved in vascular smooth muscle cell senescence and apoptosis independently of its enzymatic activity. The polypeptide is Arginase-2, mitochondrial (ARG2) (Bos taurus (Bovine)).